Here is a 351-residue protein sequence, read N- to C-terminus: Photosystem II D2 protein (351 aa).

The chain crosses the membrane as a helical span at residues 39 to 59 (TAYLAIGGWLTGTTFVTSWYT). His116 is a binding site for chlorophyll a. The chain crosses the membrane as a helical span at residues 123–139 (GFMLRQFEIARLVGIRP). Gln128 and Asn141 together coordinate pheophytin a. A helical membrane pass occupies residues 151 to 164 (VFVSVFLMYPLGQS). His196 lines the chlorophyll a pocket. A helical transmembrane segment spans residues 206–226 (GALLCAIHGATVENTLFEDGE). 2 residues coordinate a plastoquinone: His213 and Phe260. His213 provides a ligand contact to Fe cation. His267 contacts Fe cation. A helical transmembrane segment spans residues 277 to 293 (GLWTSSIGIIGLALNLR).

It belongs to the reaction center PufL/M/PsbA/D family. PSII is composed of 1 copy each of membrane proteins PsbA, PsbB, PsbC, PsbD, PsbE, PsbF, PsbH, PsbI, PsbJ, PsbK, PsbL, PsbM, PsbT, PsbX, PsbY, PsbZ, Psb30/Ycf12, peripheral proteins PsbO, CyanoQ (PsbQ), PsbU, PsbV and a large number of cofactors. It forms dimeric complexes. The cofactor is The D1/D2 heterodimer binds P680, chlorophylls that are the primary electron donor of PSII, and subsequent electron acceptors. It shares a non-heme iron and each subunit binds pheophytin, quinone, additional chlorophylls, carotenoids and lipids. There is also a Cl(-1) ion associated with D1 and D2, which is required for oxygen evolution. The PSII complex binds additional chlorophylls, carotenoids and specific lipids..

The protein resides in the cellular thylakoid membrane. It catalyses the reaction 2 a plastoquinone + 4 hnu + 2 H2O = 2 a plastoquinol + O2. Functionally, photosystem II (PSII) is a light-driven water:plastoquinone oxidoreductase that uses light energy to abstract electrons from H(2)O, generating O(2) and a proton gradient subsequently used for ATP formation. It consists of a core antenna complex that captures photons, and an electron transfer chain that converts photonic excitation into a charge separation. The D1/D2 (PsbA/PsbD) reaction center heterodimer binds P680, the primary electron donor of PSII as well as several subsequent electron acceptors. D2 is needed for assembly of a stable PSII complex. This chain is Photosystem II D2 protein, found in Synechococcus sp. (strain WH7803).